The following is a 374-amino-acid chain: MTTDAILLTPGPLTTSSRTKQSMLRDWGSWDTDFNAITARLRQGLLRIVHGEGTHECVPLQGSGTFSVEAAIGTLVPPGEKGGHVLVPVNGAYCQRIAKICKVLGRKLTTFEYAEDAQIRPEDIDRLLAKDPSITHVALVHCETSTGILNPLHEIALVVQRHGKGLIVDAMSSFGALEIDARKTPFDAVVAASGKCLEGVPGMGFVLARRAALERCEGNCHSLAMDLYDQWVYMNKTTQWRFTPPTHVVAALDAALTQYFEQGGLAARGGAYAKNCRELISGLAGLGLRSFLPAAIQAPIIVTFHAPASPAYEFKAFYNAVRQRGYILYPGKLTAVETFRVGCMGQLGARGMAGAVEAVRDALQEMGLELANAE.

The residue at position 195 (Lys195) is an N6-(pyridoxal phosphate)lysine.

The protein belongs to the class-V pyridoxal-phosphate-dependent aminotransferase family. PhnW subfamily. Homodimer. Pyridoxal 5'-phosphate serves as cofactor.

It catalyses the reaction (2-aminoethyl)phosphonate + pyruvate = phosphonoacetaldehyde + L-alanine. Functionally, involved in phosphonate degradation. This chain is 2-aminoethylphosphonate--pyruvate transaminase 1, found in Polaromonas sp. (strain JS666 / ATCC BAA-500).